Consider the following 482-residue polypeptide: Methylenetetrahydrofolate--tRNA-(uracil-5-)-methyltransferase TrmFO (482 aa).

Residue 11 to 16 (GAGLAG) coordinates FAD.

It belongs to the MnmG family. TrmFO subfamily. The cofactor is FAD.

It localises to the cytoplasm. It catalyses the reaction uridine(54) in tRNA + (6R)-5,10-methylene-5,6,7,8-tetrahydrofolate + NADH + H(+) = 5-methyluridine(54) in tRNA + (6S)-5,6,7,8-tetrahydrofolate + NAD(+). The catalysed reaction is uridine(54) in tRNA + (6R)-5,10-methylene-5,6,7,8-tetrahydrofolate + NADPH + H(+) = 5-methyluridine(54) in tRNA + (6S)-5,6,7,8-tetrahydrofolate + NADP(+). Its function is as follows. Catalyzes the folate-dependent formation of 5-methyl-uridine at position 54 (M-5-U54) in all tRNAs. The sequence is that of Methylenetetrahydrofolate--tRNA-(uracil-5-)-methyltransferase TrmFO from Nitratidesulfovibrio vulgaris (strain DP4) (Desulfovibrio vulgaris).